A 532-amino-acid chain; its full sequence is Phosphoenolpyruvate carboxykinase (ATP) (532 aa).

Residues R58, Y194, and K200 each coordinate substrate. Residues K200, H220, and G236–T244 each bind ATP. K200 and H220 together coordinate Mn(2+). D257 contacts Mn(2+). ATP contacts are provided by residues E285, R322, R442 to V443, and T448. Residue R322 coordinates substrate.

This sequence belongs to the phosphoenolpyruvate carboxykinase (ATP) family. Mn(2+) is required as a cofactor.

It is found in the cytoplasm. It catalyses the reaction oxaloacetate + ATP = phosphoenolpyruvate + ADP + CO2. It participates in carbohydrate biosynthesis; gluconeogenesis. In terms of biological role, involved in the gluconeogenesis. Catalyzes the conversion of oxaloacetate (OAA) to phosphoenolpyruvate (PEP) through direct phosphoryl transfer between the nucleoside triphosphate and OAA. This is Phosphoenolpyruvate carboxykinase (ATP) from Rubrobacter xylanophilus (strain DSM 9941 / JCM 11954 / NBRC 16129 / PRD-1).